A 369-amino-acid polypeptide reads, in one-letter code: MLAFNPLVTALAALIFLFCQANANPPLMQRLVHEYQWKTKQGLPRQGACTPHNLAVRREWSTLDVETRLEYIEAVKCLARLPSIIDPELAPGARSRFDDFQATHIRHTRTIHATGSFFAWHRHFVYLYEKALREECGYTGYQPYWEWSHWANLPITANPLYDGSNASLSGNGVYIPNRNGTLQLFPIPNPSPDTAIYTPPGTGGGYIYDGPLVDWELHLGPVLYSYDNGQYIPPNPRPDGLGYNPRPLIRDFNNTLLQQGASWDIILNMLVNVTDMHEFHPLFFQGPHLAGHIFISGVDNDIFTSPGDPLFWFHHAQVDRIWTIWQALDLETREYALDGTLTLLNCKNLPFRRILAGELTVCDDSTAQP.

Residues 1 to 23 (MLAFNPLVTALAALIFLFCQANA) form the signal peptide. His112 and His121 together coordinate Cu cation. N-linked (GlcNAc...) asparagine glycosylation is found at Asn165, Asn179, Asn253, and Asn272. His315 contacts Cu cation.

It participates in secondary metabolite biosynthesis. In terms of biological role, tyrosinase-like protein; part of the gene cluster that mediates the biosynthesis of orsellinic acid, as well as of the cathepsin K inhibitors F9775 A and F9775 B. The non-reducing polyketide synthase orsA produces orsellinic acid by condensing acetyl-CoA with 3 malonyl-CoA units. Further modifications by the decarboxylase orsB and the tyrosinase-like protein orsC lead to the production of F9775 A and F9775 B. The functions of orsD and orsE remain unclear since only orsB and orsC are required to convert orsellinic acid into F9775 A and F9775 B. The sequence is that of Tyrosinase-like protein orsC from Emericella nidulans (strain FGSC A4 / ATCC 38163 / CBS 112.46 / NRRL 194 / M139) (Aspergillus nidulans).